The following is a 506-amino-acid chain: Protein CYCLOPS (506 aa).

Disordered regions lie at residues 193–223 and 385–434; these read TVNS…LDNP and KENL…RSST. Positions 202–219 are enriched in low complexity; that stretch reads TPSQTPTFVSPSSSSTSP. Positions 385-394 are enriched in basic and acidic residues; it reads KENLKDDRKK. Residues 415 to 418 carry the Nuclear localization signal motif; that stretch reads KKRR. Residues 422–432 show a composition bias toward basic and acidic residues; sequence SRKMAEAKERS. Residues 441–506 adopt a coiled-coil conformation; it reads IQVVLKRCET…IERIVSDTNT (66 aa).

The protein belongs to the CYCLOPS family. Highly epressed in roots. Expressed at very low levels in leaves, stems and panicles.

It is found in the nucleus. Functionally, involved in arbuscular mycorrhizal (AM) symbiosis. Required for fungal infection in roots and arbuscule development during AM symbiosis. This Oryza sativa subsp. japonica (Rice) protein is Protein CYCLOPS.